A 211-amino-acid polypeptide reads, in one-letter code: Putative F-box protein At1g52490 (211 aa).

Residues 12 to 59 (EEEYLQLPLDLIVEILKKLPLKSLVRFRCVSKQFSTIICSLRDFIESV) form the F-box domain.

The protein is Putative F-box protein At1g52490 of Arabidopsis thaliana (Mouse-ear cress).